The following is a 606-amino-acid chain: Serine/threonine-protein kinase A-Raf (606 aa).

Residues 19 to 91 (GTVKVYLPNK…DGEELIVEVL (73 aa)) form the RBD domain. The Phorbol-ester/DAG-type zinc-finger motif lies at 98–144 (MHNFVRKTFFSLAFCDFCLKFLFHGFRCQTCGYKFHQHCSSKVPTVC). Residues histidine 99, cysteine 112, cysteine 115, cysteine 125, cysteine 128, histidine 133, cysteine 136, and cysteine 144 each contribute to the Zn(2+) site. Serine 157 and serine 162 each carry phosphoserine. Disordered stretches follow at residues 158–207 (VQDL…NAPL) and 241–290 (TDAA…DKKK). Residue threonine 181 is modified to Phosphothreonine. Phosphoserine is present on residues serine 186, serine 257, and serine 269. The segment covering 254–267 (PRGSPSPASVSSGR) has biased composition (low complexity). A compositionally biased stretch (basic and acidic residues) spans 274–289 (SPSEQRERKSLADDKK). Residues 310-570 (VQLLKRIGTG…PQILATIELL (261 aa)) form the Protein kinase domain. ATP contacts are provided by residues 316-324 (IGTGSFGTV) and lysine 336. Threonine 318 is modified (phosphothreonine). Aspartate 429 serves as the catalytic Proton acceptor.

This sequence belongs to the protein kinase superfamily. TKL Ser/Thr protein kinase family. RAF subfamily. As to quaternary structure, interacts with TH1L/NELFD. Zn(2+) is required as a cofactor. In terms of processing, dephosphorylation by the SHOC2-MRAS-PP1c (SMP) complex consisting of SHOC2, GTP-bound M-Ras/MRAS and the catalytic subunit of protein phosphatase 1 (PPP1CA, PPP1CB or PPP1CC); this relieves inactivation and stimulates kinase activity.

The enzyme catalyses L-seryl-[protein] + ATP = O-phospho-L-seryl-[protein] + ADP + H(+). It carries out the reaction L-threonyl-[protein] + ATP = O-phospho-L-threonyl-[protein] + ADP + H(+). Functionally, involved in the transduction of mitogenic signals from the cell membrane to the nucleus. May also regulate the TOR signaling cascade. Phosphorylates PFKFB2. In Sus scrofa (Pig), this protein is Serine/threonine-protein kinase A-Raf (ARAF).